The sequence spans 490 residues: Allantoin permease (490 aa).

12 helical membrane passes run 36-56 (IWMGCIHNIPTYATVGGLIAI), 60-80 (PWQVLAIIITASLILFGALAL), 116-136 (AIMWLGIQTFAGSTALNILLL), 151-171 (ILGIHLSGLLSFVFFWAIHLL), 190-210 (LVYLVFGGMVWWAVDIAGGLG), 225-245 (TFWPFAAGVTGIIGIWATLIL), 265-285 (FYGLPGTFALFAFASITVTSG), 308-328 (YVIVLSVITLCIATISVNVAA), 350-370 (GSFITALLALFTVPWKLMESA), 373-393 (VYAFLGLIGGMLGPVAGVMMA), 425-445 (AFAATMLGALISLIGMYVPVL), and 448-468 (LYDISWFVGVLISFLFYIVLM).

This sequence belongs to the purine-cytosine permease (2.A.39) family.

The protein localises to the cell membrane. The enzyme catalyses (S)-allantoin(in) + H(+)(in) = (S)-allantoin(out) + H(+)(out). Functionally, uptake of allantoin into the cell. Allantoin uptake is not dependent on sodium, and PucI is likely to be a proton-coupled symporter. Shows highest recognition for binding of allantoin, good recognition for binding of hydantoin, L-5-benzylhydantoin and 5-hydroxyhydantoin, and to a lesser extent for a range of nucleobases and nucleosides. In Bacillus subtilis (strain 168), this protein is Allantoin permease.